The chain runs to 316 residues: Olfactory receptor 10H28 (316 aa).

Residues 1–26 (MPGQNYSTISEFILFGFSAFPHQMLP) lie on the Extracellular side of the membrane. Asn-5 is a glycosylation site (N-linked (GlcNAc...) asparagine). The chain crosses the membrane as a helical span at residues 27-47 (ALFLLYLLMYLFTLLGNLVIM). Topologically, residues 48-57 (AAIWTEHRLH) are cytoplasmic. Residues 58 to 78 (TPMYLFLCALSISEILFTVVI) form a helical membrane-spanning segment. Topologically, residues 79–100 (TPRMLSDMLSTHRSITFIACAN) are extracellular. An intrachain disulfide couples Cys-98 to Cys-190. A helical transmembrane segment spans residues 101 to 121 (QLFFSFTFGYTHSFLLVVMGY). At 122 to 144 (DRYVAICRPLHYHALMSLQGCAR) the chain is on the cytoplasmic side. The helical transmembrane segment at 145 to 165 (LVAWSWAGGSLIGMALTIIIF) threads the bilayer. Residues 166 to 207 (HLTFCESNVIHHILCHVFSLLKLACGERTAFVTIAVILVCVT) are Extracellular-facing. The helical transmembrane segment at 208–228 (PLIGCLVFIILSYIFIVAAIL) threads the bilayer. Over 229 to 241 (RIPSTEGRHKTFS) the chain is Cytoplasmic. Residues 242 to 262 (TCASHLTVVIVHYGFASIIYL) traverse the membrane as a helical segment. At 263 to 273 (KSRGLYSQYTD) the chain is on the extracellular side. The helical transmembrane segment at 274–294 (TLMSTTYTVFTPFLSPIIFSL) threads the bilayer. The Cytoplasmic segment spans residues 295 to 316 (RNKELKNAIIKSFHRNVCQQSI).

This sequence belongs to the G-protein coupled receptor 1 family.

It localises to the cell membrane. In terms of biological role, odorant receptor. The polypeptide is Olfactory receptor 10H28 (Mus musculus (Mouse)).